The following is a 182-amino-acid chain: Probable peptidyl-prolyl cis-trans isomerase A (182 aa).

The region spanning Ala-13 to Ile-181 is the PPIase cyclophilin-type domain.

This sequence belongs to the cyclophilin-type PPIase family.

The protein localises to the cytoplasm. It carries out the reaction [protein]-peptidylproline (omega=180) = [protein]-peptidylproline (omega=0). PPIases accelerate the folding of proteins. It catalyzes the cis-trans isomerization of proline imidic peptide bonds in oligopeptides. In Mycobacterium bovis (strain ATCC BAA-935 / AF2122/97), this protein is Probable peptidyl-prolyl cis-trans isomerase A (ppiA).